The following is a 166-amino-acid chain: Phosphopantetheine adenylyltransferase (166 aa).

Thr10 provides a ligand contact to substrate. Residues 10–11 and His18 each bind ATP; that span reads TF. Positions 42, 75, and 89 each coordinate substrate. Residues 90-92, Glu100, and 125-131 contribute to the ATP site; these read GVR and YTYVAST.

Belongs to the bacterial CoaD family. In terms of assembly, homohexamer. Mg(2+) is required as a cofactor.

The protein localises to the cytoplasm. The enzyme catalyses (R)-4'-phosphopantetheine + ATP + H(+) = 3'-dephospho-CoA + diphosphate. It participates in cofactor biosynthesis; coenzyme A biosynthesis; CoA from (R)-pantothenate: step 4/5. Functionally, reversibly transfers an adenylyl group from ATP to 4'-phosphopantetheine, yielding dephospho-CoA (dPCoA) and pyrophosphate. This chain is Phosphopantetheine adenylyltransferase, found in Chlorobaculum parvum (strain DSM 263 / NCIMB 8327) (Chlorobium vibrioforme subsp. thiosulfatophilum).